The following is a 440-amino-acid chain: Ultraviolet-B receptor UVR8 (440 aa).

The residue at position 2 (A2) is an N-acetylalanine. RCC1 repeat units follow at residues 2–31 (AEDM…VALL), 32–84 (SGDI…AYSQ), 86–137 (GMEV…AVTM), 139–189 (GEVQ…AVTE), 190–241 (DGDL…SVSY), 243–293 (GALY…ALTS), 294–345 (DGKL…AVTE), and 347–399 (NNVF…SGKS). Residues 397–423 (GKSWVSPAERYAVVPDETGLTDGSSKG) are required for interaction with COP1. The tract at residues 413 to 440 (ETGLTDGSSKGNGGDISVPQTDVKRVRI) is disordered.

In terms of assembly, homodimer in the absence of UV-B, but absorption of UV-B induces monomerization of UVR8 and interaction with COP1. Interacts with RUP1, RUP2 and histone H2B.

The protein localises to the nucleus. It is found in the cytoplasm. It localises to the cytosol. UV-B specific signaling component that acts as a UV-B photoreceptor and plays a key role in establishing UV-protective responses in plants. Upon UV-B irradiation, UVR8 undergoes an immediate switch from homodimer to monomer, accumulates in the nucleus, interacts with the photomorphogenic repressor COP1 and regulates the expression of the transcription factor HY5 by associating with chromatin (through histone H2B binding) in the HY5 promoter region. UVR8 is involved in controlling aspects of leaf growth and morphogenesis in response to UV-B, is required for normal progression of endocycle and has a regulatory role in stomatal differentiation. Is required for plant circadian clock response to photomorphogenic UV-B light, partly through the transcriptional activation of responsive clock genes. Promotes photosynthetic efficiency at elevated levels of UV-B. Plays a role in mediating the effects of UV-B radiation on pathogen resistance by controlling the expression of the sinapate biosynthetic pathway. The two tryptophans, Trp-285 and Trp-233, serve collectively as the UV-B chromophore. This Arabidopsis thaliana (Mouse-ear cress) protein is Ultraviolet-B receptor UVR8.